A 154-amino-acid polypeptide reads, in one-letter code: Prefoldin subunit alpha (154 aa).

The interval E119 to E154 is disordered. Residues Q132–E154 are compositionally biased toward low complexity.

Belongs to the prefoldin subunit alpha family. Heterohexamer of two alpha and four beta subunits.

Its subcellular location is the cytoplasm. Molecular chaperone capable of stabilizing a range of proteins. Seems to fulfill an ATP-independent, HSP70-like function in archaeal de novo protein folding. This is Prefoldin subunit alpha from Haloarcula marismortui (strain ATCC 43049 / DSM 3752 / JCM 8966 / VKM B-1809) (Halobacterium marismortui).